Here is a 779-residue protein sequence, read N- to C-terminus: Probable phosphoketolase 2 (779 aa).

This sequence belongs to the XFP family. Thiamine diphosphate is required as a cofactor.

This chain is Probable phosphoketolase 2, found in Rhizobium meliloti (strain 1021) (Ensifer meliloti).